Reading from the N-terminus, the 341-residue chain is Biotin synthase (341 aa).

A Radical SAM core domain is found at 40 to 267 (AEIQVSTLLS…RSMVRLSAGR (228 aa)). [4Fe-4S] cluster is bound by residues Cys-55, Cys-59, and Cys-62. Cys-99, Cys-130, Cys-190, and Arg-262 together coordinate [2Fe-2S] cluster.

This sequence belongs to the radical SAM superfamily. Biotin synthase family. In terms of assembly, homodimer. [4Fe-4S] cluster serves as cofactor. The cofactor is [2Fe-2S] cluster.

It carries out the reaction (4R,5S)-dethiobiotin + (sulfur carrier)-SH + 2 reduced [2Fe-2S]-[ferredoxin] + 2 S-adenosyl-L-methionine = (sulfur carrier)-H + biotin + 2 5'-deoxyadenosine + 2 L-methionine + 2 oxidized [2Fe-2S]-[ferredoxin]. It functions in the pathway cofactor biosynthesis; biotin biosynthesis; biotin from 7,8-diaminononanoate: step 2/2. Its function is as follows. Catalyzes the conversion of dethiobiotin (DTB) to biotin by the insertion of a sulfur atom into dethiobiotin via a radical-based mechanism. In Xylella fastidiosa (strain M23), this protein is Biotin synthase.